Reading from the N-terminus, the 205-residue chain is Small ribosomal subunit protein uS4 (205 aa).

The span at 1-16 (MSKRESSKYKIDRRMG) shows a compositional bias: basic and acidic residues. A disordered region spans residues 1–46 (MSKRESSKYKIDRRMGENIWGRPKSPVNRREYGPGQHGQRRKGKLS). Positions 94–157 (SRLDAIVYRA…KQLVIVLEAV (64 aa)) constitute an S4 RNA-binding domain.

Belongs to the universal ribosomal protein uS4 family. In terms of assembly, part of the 30S ribosomal subunit. Contacts protein S5. The interaction surface between S4 and S5 is involved in control of translational fidelity.

One of the primary rRNA binding proteins, it binds directly to 16S rRNA where it nucleates assembly of the body of the 30S subunit. In terms of biological role, with S5 and S12 plays an important role in translational accuracy. The sequence is that of Small ribosomal subunit protein uS4 from Rhizobium johnstonii (strain DSM 114642 / LMG 32736 / 3841) (Rhizobium leguminosarum bv. viciae).